The following is a 117-amino-acid chain: Ig heavy chain V region 3 (117 aa).

Residues 1 to 19 (MGWSCIILFLVATATGVHS) form the signal peptide. The tract at residues 20–49 (QVQLQQPGAELVRPGSSVKLSCKASGYTFT) is framework-1. Cysteine 41 and cysteine 115 are joined by a disulfide. A complementarity-determining-1 region spans residues 50–54 (SYWMD). A framework-2 region spans residues 55–68 (WVKQRPGQGLEWIG). The segment at 69-85 (NIYPSDSETHYNQKFKD) is complementarity-determining-2. Positions 86–117 (KATLTVDKSSSTAYMQLSSLTSEDSAVYYCAR) are framework-3.

In Mus musculus (Mouse), this protein is Ig heavy chain V region 3 (Ighv1-61).